We begin with the raw amino-acid sequence, 750 residues long: Putative tyrosine-protein kinase EpsB (750 aa).

Over 1-31 (MTQNLPQPPAVNAPENELDLVRYLDVLVANR) the chain is Cytoplasmic. The helical transmembrane segment at 32 to 52 (WLIAGIAAAVMLLGAAYAFLA) threads the bilayer. The Periplasmic segment spans residues 53-444 (RPVYEADIMV…VPEEPVKPKK (392 aa)). The helical transmembrane segment at 445–465 (LTVTPLAGVLGVVLGVMAAFV) threads the bilayer. At 466–750 (RNALFGGITD…NSKPPEAESA (285 aa)) the chain is on the cytoplasmic side.

This sequence belongs to the etk/wzc family.

Its subcellular location is the cell inner membrane. It catalyses the reaction L-tyrosyl-[protein] + ATP = O-phospho-L-tyrosyl-[protein] + ADP + H(+). Functionally, probably involved in polymerization and/or export of exopolysaccharide EPS I which functions as a virulence factor. May be involved in an ATP-dependent process in the pathway for EPS I production, possibly export of the trimeric repeat units across the inner membrane or their polymerization. This is Putative tyrosine-protein kinase EpsB (epsB) from Ralstonia solanacearum (Pseudomonas solanacearum).